The chain runs to 289 residues: Protease HtpX (289 aa).

A run of 2 helical transmembrane segments spans residues 5–25 and 33–53; these read IVLF…VMSL and MSGL…ISLL. H140 provides a ligand contact to Zn(2+). The active site involves E141. H144 is a binding site for Zn(2+). 2 helical membrane passes run 155 to 175 and 193 to 213; these read LLQG…GGFI and GIVL…TMWF. E218 contributes to the Zn(2+) binding site.

It belongs to the peptidase M48B family. Zn(2+) is required as a cofactor.

It is found in the cell inner membrane. This is Protease HtpX from Xylella fastidiosa (strain M12).